The following is a 416-amino-acid chain: Enterobactin exporter EntS (416 aa).

At 1–21 (MNKQSWLLNLSLLKTHPAFRA) the chain is on the cytoplasmic side. The helical transmembrane segment at 22–42 (VFLARFISIVSLGLLGVAVPV) threads the bilayer. Over 43 to 55 (QIQMMTHSTWLVG) the chain is Periplasmic. A helical membrane pass occupies residues 56 to 76 (LSVTLTGGAMFVGLMVGGVLA). The Cytoplasmic segment spans residues 77 to 83 (DRYERKK). The helical transmembrane segment at 84–104 (VILLARGTCGIGFIGLCLNAL) threads the bilayer. The Periplasmic segment spans residues 105–109 (LPEPS). A helical membrane pass occupies residues 110 to 130 (LLAIYLLGLWDGFFASLGVTA). At 131–156 (LLAATPALVGRENLMQAGAITMLTVR) the chain is on the cytoplasmic side. A helical transmembrane segment spans residues 157–177 (LGSVISPMIGGLLLATGGVAW). Residue Asn-178 is a topological domain, periplasmic. A helical transmembrane segment spans residues 179 to 199 (YGLAAAGTFITLLPLLSLPAL). Residues 200-218 (PPPPQPREHPLKSLLAGFR) lie on the Cytoplasmic side of the membrane. The helical transmembrane segment at 219 to 239 (FLLASPLVGGIALLGGLLTMA) threads the bilayer. Residues 240–256 (SAVRVLYPALADNWQMS) are Periplasmic-facing. The helical transmembrane segment at 257–277 (AAEIGFLYAAIPLGAAIGALT) threads the bilayer. At 278–287 (SGKLAHSARP) the chain is on the cytoplasmic side. A helical membrane pass occupies residues 288–307 (GLLMLLSTLGSFLAIGLFGL). Topologically, residues 308-313 (MPMWIL) are periplasmic. Residues 314–336 (GVVCLALFGWLSAVSSLLQYTML) form a helical membrane-spanning segment. At 337–356 (QTQTPEAMLGRINGLWTAQN) the chain is on the cytoplasmic side. The chain crosses the membrane as a helical span at residues 357–377 (VTGDAIGAALLGGLGAMMTPV). Ala-378 is a topological domain (periplasmic). The chain crosses the membrane as a helical span at residues 379–399 (SASASGFGLLIIGVLLLLVLV). The Cytoplasmic segment spans residues 400-416 (ELRRFRQTPPQVTASDS).

It belongs to the major facilitator superfamily. EntS (TC 2.A.1.38) family.

It localises to the cell inner membrane. Functionally, component of an export pathway for enterobactin. This is Enterobactin exporter EntS from Shigella boydii serotype 4 (strain Sb227).